We begin with the raw amino-acid sequence, 185 residues long: Ribosome-recycling factor (185 aa).

A disordered region spans residues 135-159 (ANDKLKASEKNKEASEDEVKRAQEK).

It belongs to the RRF family.

It is found in the cytoplasm. Its function is as follows. Responsible for the release of ribosomes from messenger RNA at the termination of protein biosynthesis. May increase the efficiency of translation by recycling ribosomes from one round of translation to another. This chain is Ribosome-recycling factor, found in Moorella thermoacetica (strain ATCC 39073 / JCM 9320).